A 224-amino-acid polypeptide reads, in one-letter code: Putative MgpC-like protein MPN_150 (224 aa).

This sequence belongs to the MgpC family.

The polypeptide is Putative MgpC-like protein MPN_150 (Mycoplasma pneumoniae (strain ATCC 29342 / M129 / Subtype 1) (Mycoplasmoides pneumoniae)).